The following is a 253-amino-acid chain: 20 kDa chaperonin, chloroplastic (253 aa).

Residues 1–50 (MAATQLTASPVTMSARSLASLDGLRASSVKFSSLKPGTLRQSQFRRLVVK) constitute a chloroplast transit peptide. Cpn-10 domain stretches follow at residues 60–153 (TSIK…GILE) and 159–252 (DLKP…MAIL). Threonine 212 carries the post-translational modification Phosphothreonine.

The protein belongs to the GroES chaperonin family. In terms of assembly, homotetramer. Forms stable complexes with CPN60 in the presence of ATP. Interacts with FSD1. Interacts with CLPT1 and CLPT2. Interacts with CHLH. Interacts with SPY. In terms of tissue distribution, ubiquitous. Most abundant in leaves and inflorescence. Low levels found in roots.

It localises to the plastid. The protein resides in the chloroplast. Its function is as follows. Seems to function only as a co-chaperone, along with CPN60, and in certain cases is essential for the discharge of biologically active proteins from CPN60. Required to activate the iron superoxide dismutases (FeSOD). In terms of biological role, involved in abscisic acid (ABA) signaling, independently of its co-chaperone role. Acts as a negative regulator of the CHLH-WRKY40 coupled ABA signaling pathway, downstream of CHLH and upstream of WRKY40. In Arabidopsis thaliana (Mouse-ear cress), this protein is 20 kDa chaperonin, chloroplastic (CPN20).